Consider the following 261-residue polypeptide: Indole-3-glycerol phosphate synthase (261 aa).

The protein belongs to the TrpC family.

It carries out the reaction 1-(2-carboxyphenylamino)-1-deoxy-D-ribulose 5-phosphate + H(+) = (1S,2R)-1-C-(indol-3-yl)glycerol 3-phosphate + CO2 + H2O. It participates in amino-acid biosynthesis; L-tryptophan biosynthesis; L-tryptophan from chorismate: step 4/5. The chain is Indole-3-glycerol phosphate synthase from Alkaliphilus metalliredigens (strain QYMF).